The following is a 502-amino-acid chain: Glycerol kinase (502 aa).

Thr14 is a binding site for ADP. Positions 14, 15, and 16 each coordinate ATP. Sn-glycerol 3-phosphate is bound at residue Thr14. Arg18 is a binding site for ADP. Positions 84, 85, and 136 each coordinate sn-glycerol 3-phosphate. Residues Arg84, Glu85, and Tyr136 each contribute to the glycerol site. His232 carries the post-translational modification Phosphohistidine; by HPr. A sn-glycerol 3-phosphate-binding site is contributed by Asp246. Residues Asp246 and Gln247 each coordinate glycerol. ADP-binding residues include Thr268 and Gly311. Thr268, Gly311, Gln315, and Gly412 together coordinate ATP. 2 residues coordinate ADP: Gly412 and Asn416.

This sequence belongs to the FGGY kinase family. In terms of assembly, homotetramer and homodimer (in equilibrium). The phosphoenolpyruvate-dependent sugar phosphotransferase system (PTS), including enzyme I, and histidine-containing protein (HPr) are required for the phosphorylation, which leads to the activation of the enzyme.

The enzyme catalyses glycerol + ATP = sn-glycerol 3-phosphate + ADP + H(+). It participates in polyol metabolism; glycerol degradation via glycerol kinase pathway; sn-glycerol 3-phosphate from glycerol: step 1/1. Its activity is regulated as follows. Activated by phosphorylation and inhibited by fructose 1,6-bisphosphate (FBP). Key enzyme in the regulation of glycerol uptake and metabolism. Catalyzes the phosphorylation of glycerol to yield sn-glycerol 3-phosphate. The chain is Glycerol kinase from Streptococcus pneumoniae serotype 2 (strain D39 / NCTC 7466).